A 327-amino-acid polypeptide reads, in one-letter code: ABC transporter periplasmic-binding protein YphF (327 aa).

Positions 1–26 (MPTKMRTTRNLLLMATLLGSALFARA) are cleaved as a signal peptide.

Belongs to the bacterial solute-binding protein 2 family.

It localises to the periplasm. Functionally, probably part of the binding-protein-dependent transport system YphDEF. This is ABC transporter periplasmic-binding protein YphF (yphF) from Escherichia coli (strain K12).